The primary structure comprises 65 residues: MRIVYLLLPFILLLAQGAAGSSQALGRKSDCFRKNGFCAFLKCPYLTLISGKCSRFHLCCKRIWG.

The first 19 residues, M1 to A19, serve as a signal peptide directing secretion. Residues G20–L25 constitute a propeptide that is removed on maturation. Disulfide bonds link C31-C59, C38-C53, and C43-C60.

This sequence belongs to the beta-defensin family.

Its subcellular location is the secreted. The protein resides in the cytoplasmic granule. Its function is as follows. Has bactericidal activity. Potent activity against E.coli ML-35, L.monocytogenes EGD and C.albicans. This is Gallinacin-1 alpha from Gallus gallus (Chicken).